Reading from the N-terminus, the 318-residue chain is L-lactate dehydrogenase 1 (318 aa).

NAD(+) is bound by residues Val-17, Asp-38, Lys-43, Tyr-69, and 83–84 (GA). Residues Gln-86, Arg-92, and 124 to 127 (NPVD) each bind substrate. NAD(+)-binding positions include 122–124 (ATN) and Ser-147. 152-155 (DTGR) contributes to the substrate binding site. Beta-D-fructose 1,6-bisphosphate-binding residues include Arg-157 and His-172. The active-site Proton acceptor is His-179. Tyr-224 carries the post-translational modification Phosphotyrosine. Thr-233 provides a ligand contact to substrate.

This sequence belongs to the LDH/MDH superfamily. LDH family. As to quaternary structure, homotetramer.

It is found in the cytoplasm. It carries out the reaction (S)-lactate + NAD(+) = pyruvate + NADH + H(+). Its pathway is fermentation; pyruvate fermentation to lactate; (S)-lactate from pyruvate: step 1/1. Its activity is regulated as follows. Allosterically activated by fructose 1,6-bisphosphate (FBP). In terms of biological role, catalyzes the conversion of lactate to pyruvate. The chain is L-lactate dehydrogenase 1 from Peribacillus psychrosaccharolyticus (Bacillus psychrosaccharolyticus).